The chain runs to 887 residues: CWF19-like protein 2 (887 aa).

Residues 1 to 143 (MEAFSVRFES…DKRTEEECDS (143 aa)) form a disordered region. A coiled-coil region spans residues 11–103 (ASSIEERKEQ…KKQKCQKQSE (93 aa)). Residues 14–72 (IEERKEQTRNARAEVLRQAKHNFEKEQRGEERKRLRDEDTWMLPDVHERIEQFSQEHSE) show a composition bias toward basic and acidic residues. Serine 71 bears the Phosphoserine mark. Residues 73–98 (KKKKKKDKHSKKVKKEKKKKRKKQKC) show a composition bias toward basic residues. Low complexity predominate over residues 99 to 110 (QKQSESTDSSAS). A compositionally biased stretch (basic and acidic residues) spans 124 to 143 (SDKEKTWKVKDKRTEEECDS). Positions 164 to 254 (SSSLKAEKET…RNFEDIVAEK (91 aa)) form a coiled coil. A Glycyl lysine isopeptide (Lys-Gly) (interchain with G-Cter in SUMO2) cross-link involves residue lysine 168. Disordered regions lie at residues 315–370 (LEME…DEDE) and 405–447 (SEES…GRRE). A compositionally biased stretch (basic and acidic residues) spans 342–352 (CRRESALRKNQ). Phosphoserine is present on residues serine 354 and serine 366. A compositionally biased stretch (basic and acidic residues) spans 414–430 (RSDRRQENRKPSDKKPL). Over residues 433-442 (WSYNANQHST) the composition is skewed to polar residues. The residue at position 478 (serine 478) is a Phosphoserine. Residues 495–524 (IKAEMMGNMELAEQLKAQLKEANKFKETQM) adopt a coiled-coil conformation. Residue lysine 597 forms a Glycyl lysine isopeptide (Lys-Gly) (interchain with G-Cter in SUMO2) linkage. Serine 622 is modified (phosphoserine).

It belongs to the CWF19 family.

This Mus musculus (Mouse) protein is CWF19-like protein 2 (Cwf19l2).